The primary structure comprises 29 residues: Potassium channel toxin alpha-KTx 3.15 (29 aa).

Cysteine 8 and cysteine 27 are oxidised to a cystine.

The protein belongs to the short scorpion toxin superfamily. Potassium channel inhibitor family. Alpha-KTx 03 subfamily. In terms of tissue distribution, expressed by the venom gland.

It localises to the secreted. Its function is as follows. May play a role in blocking voltage-gated potassium channels Kv1.1/KCNA1, Kv1.3/KCNA3 and Kv1.6/KCNA6. The chain is Potassium channel toxin alpha-KTx 3.15 from Mesobuthus gibbosus (Mediterranean checkered scorpion).